We begin with the raw amino-acid sequence, 560 residues long: Dihydroxy-acid dehydratase (560 aa).

Residue Cys-52 coordinates [2Fe-2S] cluster. Asp-84 serves as a coordination point for Mg(2+). Cys-125 serves as a coordination point for [2Fe-2S] cluster. Mg(2+)-binding residues include Asp-126 and Lys-127. An N6-carboxylysine modification is found at Lys-127. Cys-197 lines the [2Fe-2S] cluster pocket. Glu-448 lines the Mg(2+) pocket. Residue Ser-474 is the Proton acceptor of the active site.

The protein belongs to the IlvD/Edd family. As to quaternary structure, homodimer. The cofactor is [2Fe-2S] cluster. Mg(2+) is required as a cofactor.

It carries out the reaction (2R)-2,3-dihydroxy-3-methylbutanoate = 3-methyl-2-oxobutanoate + H2O. The catalysed reaction is (2R,3R)-2,3-dihydroxy-3-methylpentanoate = (S)-3-methyl-2-oxopentanoate + H2O. It functions in the pathway amino-acid biosynthesis; L-isoleucine biosynthesis; L-isoleucine from 2-oxobutanoate: step 3/4. It participates in amino-acid biosynthesis; L-valine biosynthesis; L-valine from pyruvate: step 3/4. In terms of biological role, functions in the biosynthesis of branched-chain amino acids. Catalyzes the dehydration of (2R,3R)-2,3-dihydroxy-3-methylpentanoate (2,3-dihydroxy-3-methylvalerate) into 2-oxo-3-methylpentanoate (2-oxo-3-methylvalerate) and of (2R)-2,3-dihydroxy-3-methylbutanoate (2,3-dihydroxyisovalerate) into 2-oxo-3-methylbutanoate (2-oxoisovalerate), the penultimate precursor to L-isoleucine and L-valine, respectively. The polypeptide is Dihydroxy-acid dehydratase (Francisella tularensis subsp. novicida (strain U112)).